Consider the following 388-residue polypeptide: Succinate--CoA ligase [ADP-forming] subunit beta (388 aa).

In terms of domain architecture, ATP-grasp spans 9–244; it reads KQLFAEFGLP…PSQEDEREAH (236 aa). ATP contacts are provided by residues Lys-46, 53–55, Glu-99, Ser-102, and Glu-107; that span reads GRG. Residues Asn-199 and Asp-213 each contribute to the Mg(2+) site. Residues Asn-264 and 321–323 each bind substrate; that span reads GIV.

The protein belongs to the succinate/malate CoA ligase beta subunit family. As to quaternary structure, heterotetramer of two alpha and two beta subunits. It depends on Mg(2+) as a cofactor.

The catalysed reaction is succinate + ATP + CoA = succinyl-CoA + ADP + phosphate. It catalyses the reaction GTP + succinate + CoA = succinyl-CoA + GDP + phosphate. The protein operates within carbohydrate metabolism; tricarboxylic acid cycle; succinate from succinyl-CoA (ligase route): step 1/1. Its function is as follows. Succinyl-CoA synthetase functions in the citric acid cycle (TCA), coupling the hydrolysis of succinyl-CoA to the synthesis of either ATP or GTP and thus represents the only step of substrate-level phosphorylation in the TCA. The beta subunit provides nucleotide specificity of the enzyme and binds the substrate succinate, while the binding sites for coenzyme A and phosphate are found in the alpha subunit. The polypeptide is Succinate--CoA ligase [ADP-forming] subunit beta (Vibrio campbellii (strain ATCC BAA-1116)).